A 274-amino-acid chain; its full sequence is Undecaprenyl-diphosphatase 1 (274 aa).

The next 8 membrane-spanning stretches (helical) occupy residues 4 to 24, 45 to 65, 84 to 104, 111 to 131, 146 to 166, 186 to 206, 217 to 237, and 249 to 269; these read LLLL…FLPI, SAVF…YEYW, HLAI…LSFG, LFND…IMWI, IGLK…IPGT, ATEF…LLDL, FDWS…LLLI, and FMVF…FAYT.

Belongs to the UppP family.

The protein localises to the cell inner membrane. It carries out the reaction di-trans,octa-cis-undecaprenyl diphosphate + H2O = di-trans,octa-cis-undecaprenyl phosphate + phosphate + H(+). Functionally, catalyzes the dephosphorylation of undecaprenyl diphosphate (UPP). Confers resistance to bacitracin. In Acinetobacter baylyi (strain ATCC 33305 / BD413 / ADP1), this protein is Undecaprenyl-diphosphatase 1.